The chain runs to 183 residues: MLEKNLDKAIEKVLVSEEEIIEKSKELGEILTKEYEGKNPLVLGILRGSVPFLAELIKHIDCHLETDFMTVSSYHGGTKSSGEVKLILDVDTAVKGRDILIVEDIIDTGRTLKYLKELLEHRGANVKIVTLLDKPEGRIVEIKPDYSGFTIPNEFVVGFGLDYEENYRNLPYVGVLKPEVYNK.

Diphosphate contacts are provided by arginine 47 and glycine 48. 2 residues coordinate Mg(2+): glutamate 103 and aspartate 104. The Proton acceptor role is filled by aspartate 107. GMP is bound by residues lysine 134, 155 to 156 (FV), and aspartate 162. Arginine 168 serves as a coordination point for diphosphate.

This sequence belongs to the purine/pyrimidine phosphoribosyltransferase family. Requires Mg(2+) as cofactor.

The protein resides in the cytoplasm. It carries out the reaction IMP + diphosphate = hypoxanthine + 5-phospho-alpha-D-ribose 1-diphosphate. The enzyme catalyses GMP + diphosphate = guanine + 5-phospho-alpha-D-ribose 1-diphosphate. It participates in purine metabolism; IMP biosynthesis via salvage pathway; IMP from hypoxanthine: step 1/1. The protein operates within purine metabolism; GMP biosynthesis via salvage pathway; GMP from guanine: step 1/1. Functionally, purine salvage pathway enzyme that catalyzes the transfer of the ribosyl-5-phosphate group from 5-phospho-alpha-D-ribose 1-diphosphate (PRPP) to the N9 position of the 6-oxopurines hypoxanthine and guanine to form the corresponding ribonucleotides IMP (inosine 5'-monophosphate) and GMP (guanosine 5'-monophosphate), with the release of PPi. In Lactococcus lactis subsp. lactis (strain IL1403) (Streptococcus lactis), this protein is Hypoxanthine-guanine phosphoribosyltransferase (hpt).